The chain runs to 355 residues: UDP-N-acetylglucosamine--N-acetylmuramyl-(pentapeptide) pyrophosphoryl-undecaprenol N-acetylglucosamine transferase (355 aa).

Residues 15–17 (TGG), asparagine 127, arginine 163, serine 191, isoleucine 244, 263–268 (ALTVSE), and glutamine 288 each bind UDP-N-acetyl-alpha-D-glucosamine.

The protein belongs to the glycosyltransferase 28 family. MurG subfamily.

The protein resides in the cell inner membrane. It catalyses the reaction di-trans,octa-cis-undecaprenyl diphospho-N-acetyl-alpha-D-muramoyl-L-alanyl-D-glutamyl-meso-2,6-diaminopimeloyl-D-alanyl-D-alanine + UDP-N-acetyl-alpha-D-glucosamine = di-trans,octa-cis-undecaprenyl diphospho-[N-acetyl-alpha-D-glucosaminyl-(1-&gt;4)]-N-acetyl-alpha-D-muramoyl-L-alanyl-D-glutamyl-meso-2,6-diaminopimeloyl-D-alanyl-D-alanine + UDP + H(+). The protein operates within cell wall biogenesis; peptidoglycan biosynthesis. In terms of biological role, cell wall formation. Catalyzes the transfer of a GlcNAc subunit on undecaprenyl-pyrophosphoryl-MurNAc-pentapeptide (lipid intermediate I) to form undecaprenyl-pyrophosphoryl-MurNAc-(pentapeptide)GlcNAc (lipid intermediate II). In Salmonella choleraesuis (strain SC-B67), this protein is UDP-N-acetylglucosamine--N-acetylmuramyl-(pentapeptide) pyrophosphoryl-undecaprenol N-acetylglucosamine transferase.